The primary structure comprises 447 residues: Na(+)-translocating NADH-quinone reductase subunit A (447 aa).

It belongs to the NqrA family. In terms of assembly, composed of six subunits; NqrA, NqrB, NqrC, NqrD, NqrE and NqrF.

It catalyses the reaction a ubiquinone + n Na(+)(in) + NADH + H(+) = a ubiquinol + n Na(+)(out) + NAD(+). In terms of biological role, NQR complex catalyzes the reduction of ubiquinone-1 to ubiquinol by two successive reactions, coupled with the transport of Na(+) ions from the cytoplasm to the periplasm. NqrA to NqrE are probably involved in the second step, the conversion of ubisemiquinone to ubiquinol. The sequence is that of Na(+)-translocating NADH-quinone reductase subunit A from Saccharophagus degradans (strain 2-40 / ATCC 43961 / DSM 17024).